The chain runs to 320 residues: MARSKIALIGAGQIGGTLAHLAGLKELGDVVLFDIVDGVPQGKALDIAESAPVDGFDAKYSGASDYSAIAGADVVIVTAGVPRKPGMSRDDLIGINLKVMEAVGAGIKEHAPNAFVICITNPLDAMVWALQKFSGLPTNKVVGMAGVLDSARFRHFLAEEFGVSVEDVTAFVLGGHGDDMVPLTRYSTVAGVPLTDLVKLGWTTQEKLDAMVERTRKGGGEIVNLLKTGSAFYAPASSAIAMAESYLRDKKRVLPCAAYLAGEYGVDGLYVGVPVVIGENGVERVLEVTFNEDEKAMFEKSVGAVKGLIAACQGINDKLA.

NAD(+)-binding positions include 10–15 (GAGQIG) and Asp-34. Substrate is bound by residues Arg-83 and Arg-89. Residues Asn-96 and 119 to 121 (ITN) contribute to the NAD(+) site. 2 residues coordinate substrate: Asn-121 and Arg-152. Catalysis depends on His-176, which acts as the Proton acceptor.

It belongs to the LDH/MDH superfamily. MDH type 3 family.

It catalyses the reaction (S)-malate + NAD(+) = oxaloacetate + NADH + H(+). Functionally, catalyzes the reversible oxidation of malate to oxaloacetate. The sequence is that of Malate dehydrogenase from Methylorubrum populi (strain ATCC BAA-705 / NCIMB 13946 / BJ001) (Methylobacterium populi).